A 465-amino-acid polypeptide reads, in one-letter code: Siroheme synthase (465 aa).

Residues 1–203 (MDFLPLFHSL…GRPAEAERLL (203 aa)) are precorrin-2 dehydrogenase /sirohydrochlorin ferrochelatase. NAD(+) contacts are provided by residues 22–23 (EV) and 43–44 (PQ). S128 bears the Phosphoserine mark. The tract at residues 217-465 (GEVYLVGAGP…AWFEGAREDA (249 aa)) is uroporphyrinogen-III C-methyltransferase. P226 is a binding site for S-adenosyl-L-methionine. Residue D249 is the Proton acceptor of the active site. K271 (proton donor) is an active-site residue. S-adenosyl-L-methionine is bound by residues 302-304 (GGD), I307, 332-333 (TA), M384, and G413.

This sequence in the N-terminal section; belongs to the precorrin-2 dehydrogenase / sirohydrochlorin ferrochelatase family. The protein in the C-terminal section; belongs to the precorrin methyltransferase family.

It carries out the reaction uroporphyrinogen III + 2 S-adenosyl-L-methionine = precorrin-2 + 2 S-adenosyl-L-homocysteine + H(+). It catalyses the reaction precorrin-2 + NAD(+) = sirohydrochlorin + NADH + 2 H(+). The enzyme catalyses siroheme + 2 H(+) = sirohydrochlorin + Fe(2+). It participates in cofactor biosynthesis; adenosylcobalamin biosynthesis; precorrin-2 from uroporphyrinogen III: step 1/1. Its pathway is cofactor biosynthesis; adenosylcobalamin biosynthesis; sirohydrochlorin from precorrin-2: step 1/1. The protein operates within porphyrin-containing compound metabolism; siroheme biosynthesis; precorrin-2 from uroporphyrinogen III: step 1/1. It functions in the pathway porphyrin-containing compound metabolism; siroheme biosynthesis; siroheme from sirohydrochlorin: step 1/1. It participates in porphyrin-containing compound metabolism; siroheme biosynthesis; sirohydrochlorin from precorrin-2: step 1/1. Multifunctional enzyme that catalyzes the SAM-dependent methylations of uroporphyrinogen III at position C-2 and C-7 to form precorrin-2 via precorrin-1. Then it catalyzes the NAD-dependent ring dehydrogenation of precorrin-2 to yield sirohydrochlorin. Finally, it catalyzes the ferrochelation of sirohydrochlorin to yield siroheme. The chain is Siroheme synthase from Pseudomonas aeruginosa (strain UCBPP-PA14).